The primary structure comprises 181 residues: Insulin-like growth factor 2 (181 aa).

Residues 1 to 24 (MGIPVGKSLLMLFTFLAFASCCIA) form the signal peptide. The b stretch occupies residues 25–52 (AYRPSETLCGGELVDTLQFVCGDRGFYF). 3 disulfide bridges follow: cysteine 33–cysteine 71, cysteine 45–cysteine 84, and cysteine 70–cysteine 75. The segment at 53 to 64 (SRPASRINRRSR) is c. The interval 65–85 (GIVEECCFRSCDLALLETYCA) is a. The interval 86 to 91 (TPAKSE) is d. Residues 92-181 (RDVSTPPTVL…AFVEVSSDLQ (90 aa)) constitute a propeptide, e peptide. Threonine 163 carries O-linked (GalNAc...) threonine glycosylation.

This sequence belongs to the insulin family. As to quaternary structure, interacts with MYORG; this interaction is required for IGF2 secretion. Interacts with integrins ITGAV:ITGB3 and ITGA6:ITGB4; integrin-binding is required for IGF2 signaling. Interacts with IGFBP2. Post-translationally, proteolytically processed by PCSK4, proIGF2 is cleaved at Arg-128 and Arg-92 to generate big-IGF2 and mature IGF2.

The protein resides in the secreted. Functionally, the insulin-like growth factors possess growth-promoting activity. Major fetal growth hormone in mammals. Plays a key role in regulating fetoplacental development. IGF2 is influenced by placental lactogen. Also involved in tissue differentiation. In adults, involved in glucose metabolism in adipose tissue, skeletal muscle and liver. Acts as a ligand for integrin which is required for IGF2 signaling. Positively regulates myogenic transcription factor MYOD1 function by facilitating the recruitment of transcriptional coactivators, thereby controlling muscle terminal differentiation. Inhibits myoblast differentiation and modulates metabolism via increasing the mitochondrial respiration rate. In terms of biological role, preptin undergoes glucose-mediated co-secretion with insulin, and acts as a physiological amplifier of glucose-mediated insulin secretion. Exhibits osteogenic properties by increasing osteoblast mitogenic activity through phosphoactivation of MAPK1 and MAPK3. The protein is Insulin-like growth factor 2 of Equus caballus (Horse).